We begin with the raw amino-acid sequence, 376 residues long: Rhodopsin (376 aa).

At 1–52 the chain is on the extracellular side; the sequence is MSSWSNQPAMDDYGLPSSNPYGNFTVVDMAPKDILHMIHPHWYQYPPMNPMM. N23 is a glycosylation site (N-linked (GlcNAc...) asparagine). Residues 53–77 traverse the membrane as a helical segment; it reads YPLLLIFMLFTGILCLAGNFVTIWV. Residues 78–89 lie on the Cytoplasmic side of the membrane; sequence FMNTKSLRTPAN. Residues 90–112 form a helical membrane-spanning segment; sequence LLVVNLAMSDFLMMFTMFPPMMV. Topologically, residues 113–126 are extracellular; the sequence is TCYYHTWTLGPTFC. A disulfide bond links C126 and C203. A helical membrane pass occupies residues 127 to 149; the sequence is QVYAFLGNLCGCASIWTMVFITF. Positions 150–152 match the 'Ionic lock' involved in activated form stabilization motif; sequence DRY. The Cytoplasmic segment spans residues 150 to 168; that stretch reads DRYNVIVKGVAGEPLSTKK. Residues 169-189 traverse the membrane as a helical segment; sequence ASLWILTIWVLSITWCIAPFF. The Extracellular portion of the chain corresponds to 190-216; sequence GWNRYVPEGNLTGCGTDYLSEDILSRS. N-linked (GlcNAc...) asparagine glycosylation occurs at N199. Residues 217 to 237 traverse the membrane as a helical segment; that stretch reads YLYDYSTWVYYLPLLPIYCYV. At 238–278 the chain is on the cytoplasmic side; it reads SIIKAVAAHEKGMRDQAKKMGIKSLRNEEAQKTSAECRLAK. A helical transmembrane segment spans residues 279–300; the sequence is IAMTTVALWFIAWTPYLLINWV. Residues 301 to 311 lie on the Extracellular side of the membrane; sequence GMFARSYLSPV. Residues 312–333 form a helical membrane-spanning segment; the sequence is YTIWGYVFAKANAVYNPIVYAI. An N6-(retinylidene)lysine modification is found at K321. The Cytoplasmic portion of the chain corresponds to 334–376; sequence SHPKYRAAMEKKLPCLSCKTESDDVSESASTTTSSAEEKAESA. Positions 353–376 are disordered; that stretch reads TESDDVSESASTTTSSAEEKAESA.

It belongs to the G-protein coupled receptor 1 family. Opsin subfamily. As to quaternary structure, homodimer. Interacts with GNAQ. Post-translationally, contains one covalently linked retinal chromophore. In terms of tissue distribution, detected on rhabdomere membranes on photoreceptor cells in the retina (at protein level).

It localises to the cell projection. It is found in the rhabdomere membrane. Functionally, photoreceptor required for image-forming vision at low light intensity. Can use both retinal and 3-dehydroretinal as visual pigment. Light-induced isomerization of 11-cis to all-trans retinal triggers a conformational change that activates signaling via G-proteins. Signaling via GNAQ probably mediates the activation of phospholipase C. This is Rhodopsin (RHO) from Procambarus clarkii (Red swamp crayfish).